A 367-amino-acid polypeptide reads, in one-letter code: UDP-N-acetylglucosamine--N-acetylmuramyl-(pentapeptide) pyrophosphoryl-undecaprenol N-acetylglucosamine transferase (367 aa).

UDP-N-acetyl-alpha-D-glucosamine-binding positions include T11–G13, N125, R163, S197, and Q289.

Belongs to the glycosyltransferase 28 family. MurG subfamily.

It is found in the cell membrane. The catalysed reaction is di-trans,octa-cis-undecaprenyl diphospho-N-acetyl-alpha-D-muramoyl-L-alanyl-D-glutamyl-meso-2,6-diaminopimeloyl-D-alanyl-D-alanine + UDP-N-acetyl-alpha-D-glucosamine = di-trans,octa-cis-undecaprenyl diphospho-[N-acetyl-alpha-D-glucosaminyl-(1-&gt;4)]-N-acetyl-alpha-D-muramoyl-L-alanyl-D-glutamyl-meso-2,6-diaminopimeloyl-D-alanyl-D-alanine + UDP + H(+). The protein operates within cell wall biogenesis; peptidoglycan biosynthesis. Its function is as follows. Cell wall formation. Catalyzes the transfer of a GlcNAc subunit on undecaprenyl-pyrophosphoryl-MurNAc-pentapeptide (lipid intermediate I) to form undecaprenyl-pyrophosphoryl-MurNAc-(pentapeptide)GlcNAc (lipid intermediate II). The sequence is that of UDP-N-acetylglucosamine--N-acetylmuramyl-(pentapeptide) pyrophosphoryl-undecaprenol N-acetylglucosamine transferase from Clavibacter sepedonicus (Clavibacter michiganensis subsp. sepedonicus).